A 1275-amino-acid polypeptide reads, in one-letter code: ATP-dependent helicase/nuclease subunit A (1275 aa).

Residues 4–481 form the UvrD-like helicase ATP-binding domain; it reads PKWTKEQLEV…IMLYKNFRSR (478 aa). 25–32 contacts ATP; it reads AAAGSGKT. Residues 531-839 form the UvrD-like helicase C-terminal domain; that stretch reads TEIHLIQKDN…RIMSIHKSKG (309 aa).

The protein belongs to the helicase family. AddA subfamily. In terms of assembly, heterodimer of AddA and AddB/RexB. Mg(2+) is required as a cofactor.

The enzyme catalyses Couples ATP hydrolysis with the unwinding of duplex DNA by translocating in the 3'-5' direction.. It catalyses the reaction ATP + H2O = ADP + phosphate + H(+). Functionally, the heterodimer acts as both an ATP-dependent DNA helicase and an ATP-dependent, dual-direction single-stranded exonuclease. Recognizes the chi site generating a DNA molecule suitable for the initiation of homologous recombination. The AddA nuclease domain is required for chi fragment generation; this subunit has the helicase and 3' -&gt; 5' nuclease activities. The protein is ATP-dependent helicase/nuclease subunit A of Clostridioides difficile (strain 630) (Peptoclostridium difficile).